Consider the following 205-residue polypeptide: Putative 3-methyladenine DNA glycosylase (205 aa).

This sequence belongs to the DNA glycosylase MPG family.

The polypeptide is Putative 3-methyladenine DNA glycosylase (Clostridium perfringens (strain 13 / Type A)).